Consider the following 351-residue polypeptide: MSRAPRTARAELPKGEQARHVPVLLAEVLAALSLDRPGLAVDGTFGAGGYTRALLEAGPEVRVIAIDRDPTAIRGGADLVTASGGRLRLVQGRFGDLDTLIADQDEAQADWIVLDIGVSSMQIDEAQRGFSFRQDGPLDMRMGGEGPSAADLVNGEEETTLADILYHFGEERRSRAVARAIVEARRRAPIETTAQLADLVAGVVRPEPGSPIHPATRSFQGLRIAVNDELGELVRGLHAAERVLKPGGRLAVVTFHSLEDRIVKQFFSARSGRAAQASRHVPGVERPAPKSFKLVTKGPVLPSEAETDVNPRSRSAKLRAGERTDAPAPPPLSAIEMLASLPAPQGRGPRR.

S-adenosyl-L-methionine is bound by residues 48–50, Asp67, Phe94, Asp115, and Gln122; that span reads GGY. A disordered region spans residues 274–351; that stretch reads AAQASRHVPG…PAPQGRGPRR (78 aa).

The protein belongs to the methyltransferase superfamily. RsmH family.

The protein resides in the cytoplasm. It carries out the reaction cytidine(1402) in 16S rRNA + S-adenosyl-L-methionine = N(4)-methylcytidine(1402) in 16S rRNA + S-adenosyl-L-homocysteine + H(+). Specifically methylates the N4 position of cytidine in position 1402 (C1402) of 16S rRNA. This is Ribosomal RNA small subunit methyltransferase H from Methylorubrum extorquens (strain ATCC 14718 / DSM 1338 / JCM 2805 / NCIMB 9133 / AM1) (Methylobacterium extorquens).